A 317-amino-acid chain; its full sequence is MLTFQQIILKLQSYWADQGCALLQPYDMEVGAGTSHTATFLRALGPEPWKAAYVQPSRRPKDGRYGENPNRLQHYYQYQVVLKPAPDNILELYLGSLEALGFDLKKNDIRFVEDDWENPTLGAWGLGWEVWLNGMEVTQFTYFQQVGGIDCKPATGEITYGLERLAMYLQGVDNVYNLTWTEGPNGAKLTYGDVYHQNEVEQSTYNFEHSDAEFLFTAFGAHEKQANHLMGEQLALPAYEQVLKAAHTFNLLDARGAISVTERAAYIGRIRNLARAVAKAYLDSRARLGFPMAPKAHADEVLAELAKAAEQQNKKAA.

This sequence belongs to the class-II aminoacyl-tRNA synthetase family. In terms of assembly, tetramer of two alpha and two beta subunits.

The protein resides in the cytoplasm. It carries out the reaction tRNA(Gly) + glycine + ATP = glycyl-tRNA(Gly) + AMP + diphosphate. The sequence is that of Glycine--tRNA ligase alpha subunit from Acidovorax ebreus (strain TPSY) (Diaphorobacter sp. (strain TPSY)).